Reading from the N-terminus, the 254-residue chain is UPF0246 protein CPF_2407 (254 aa).

This sequence belongs to the UPF0246 family.

The sequence is that of UPF0246 protein CPF_2407 from Clostridium perfringens (strain ATCC 13124 / DSM 756 / JCM 1290 / NCIMB 6125 / NCTC 8237 / Type A).